The following is a 247-amino-acid chain: Protein-L-isoaspartate O-methyltransferase 2 (247 aa).

S97 is a catalytic residue.

It belongs to the methyltransferase superfamily. L-isoaspartyl/D-aspartyl protein methyltransferase family.

Its subcellular location is the cytoplasm. It carries out the reaction [protein]-L-isoaspartate + S-adenosyl-L-methionine = [protein]-L-isoaspartate alpha-methyl ester + S-adenosyl-L-homocysteine. Its function is as follows. Catalyzes the methyl esterification of L-isoaspartyl residues in peptides and proteins that result from spontaneous decomposition of normal L-aspartyl and L-asparaginyl residues. It plays a role in the repair and/or degradation of damaged proteins. The polypeptide is Protein-L-isoaspartate O-methyltransferase 2 (Syntrophobacter fumaroxidans (strain DSM 10017 / MPOB)).